The sequence spans 873 residues: Leucine--tRNA ligase (873 aa).

Residues 48–58 carry the 'HIGH' region motif; that stretch reads PYPSGKLHMGH. The short motif at 636–640 is the 'KMSKS' region element; that stretch reads KMSKS. ATP is bound at residue lysine 639.

The protein belongs to the class-I aminoacyl-tRNA synthetase family.

The protein localises to the cytoplasm. It carries out the reaction tRNA(Leu) + L-leucine + ATP = L-leucyl-tRNA(Leu) + AMP + diphosphate. The sequence is that of Leucine--tRNA ligase from Cupriavidus metallidurans (strain ATCC 43123 / DSM 2839 / NBRC 102507 / CH34) (Ralstonia metallidurans).